The primary structure comprises 783 residues: BMP/retinoic acid-inducible neural-specific protein 2 (783 aa).

The signal sequence occupies residues 1–33 (MRWQCGTRFRGLRPVVAPWTALLALGLPGWVLA). The region spanning 85-281 (RYRIYREFAR…FVAAALSYIT (197 aa)) is the MACPF domain. N-linked (GlcNAc...) asparagine glycosylation is found at Asn-185, Asn-354, Asn-473, Asn-579, Asn-626, and Asn-658.

Belongs to the BRINP family.

The protein resides in the secreted. In terms of biological role, inhibits neuronal cell proliferation by negative regulation of the cell cycle transition. This is BMP/retinoic acid-inducible neural-specific protein 2 (BRINP2) from Pongo abelii (Sumatran orangutan).